The following is a 715-amino-acid chain: Epidermal growth factor receptor kinase substrate 8-like protein 2 (715 aa).

Residues 46–202 (MHETSQYHVQ…RQRQSILPPP (157 aa)) enclose the PID domain. A disordered region spans residues 183–243 (QTLKGHQEKI…GFRRRESQEE (61 aa)). Over residues 199-208 (LPPPQGPAPI) the composition is skewed to pro residues. Composition is skewed to basic and acidic residues over residues 213 to 222 (RGGDSPEAKN) and 234 to 243 (GFRRRESQEE). Serine 240 carries the phosphoserine modification. Position 303 is a phosphothreonine (threonine 303). The segment at 448-487 (VSPVSRQSIRNSQKHSPTSEPTPPGDALPPVSSPHTHRGY) is disordered. Residue serine 449 is modified to Phosphoserine. The span at 451–466 (VSRQSIRNSQKHSPTS) shows a compositional bias: polar residues. Residue threonine 469 is modified to Phosphothreonine. An SH3 domain is found at 492–551 (AMAKYVKILYDFTARNANELSVLKDEVLEVLEDGRQWWKLRSRSGQAGYVPCNILGEARP). Phosphoserine is present on serine 570.

It belongs to the EPS8 family. In terms of assembly, interacts with ABI1. Part of a complex that contains SOS1, ABI1 and EPS8L2. Associates with F-actin. In terms of tissue distribution, detected in fibroblasts and placenta.

It localises to the cytoplasm. It is found in the cell projection. Its subcellular location is the stereocilium. Functionally, stimulates guanine exchange activity of SOS1. May play a role in membrane ruffling and remodeling of the actin cytoskeleton. In the cochlea, is required for stereocilia maintenance in adult hair cells. The chain is Epidermal growth factor receptor kinase substrate 8-like protein 2 (EPS8L2) from Homo sapiens (Human).